The primary structure comprises 177 residues: UPF0102 protein BPP4042 (177 aa).

The disordered stretch occupies residues 13–43 (AAQAQRRLHRRPPASPRASPGARDGGSPTQR).

It belongs to the UPF0102 family.

This is UPF0102 protein BPP4042 from Bordetella parapertussis (strain 12822 / ATCC BAA-587 / NCTC 13253).